Here is a 453-residue protein sequence, read N- to C-terminus: Probable glycine dehydrogenase (decarboxylating) subunit 1 (453 aa).

The protein belongs to the GcvP family. N-terminal subunit subfamily. In terms of assembly, the glycine cleavage system is composed of four proteins: P, T, L and H. In this organism, the P 'protein' is a heterodimer of two subunits.

It catalyses the reaction N(6)-[(R)-lipoyl]-L-lysyl-[glycine-cleavage complex H protein] + glycine + H(+) = N(6)-[(R)-S(8)-aminomethyldihydrolipoyl]-L-lysyl-[glycine-cleavage complex H protein] + CO2. In terms of biological role, the glycine cleavage system catalyzes the degradation of glycine. The P protein binds the alpha-amino group of glycine through its pyridoxal phosphate cofactor; CO(2) is released and the remaining methylamine moiety is then transferred to the lipoamide cofactor of the H protein. The protein is Probable glycine dehydrogenase (decarboxylating) subunit 1 of Nitrosomonas europaea (strain ATCC 19718 / CIP 103999 / KCTC 2705 / NBRC 14298).